A 104-amino-acid polypeptide reads, in one-letter code: T-complex protein 1 subunit zeta (104 aa).

Position 24 (G24) interacts with ADP. Residue G24 coordinates ATP. Residue D75 participates in Mg(2+) binding. ADP-binding residues include G76, T78, and S79. G76 and T78 together coordinate ATP.

This sequence belongs to the TCP-1 chaperonin family. As to quaternary structure, component of the chaperonin-containing T-complex (TRiC), a hexadecamer composed of two identical back-to-back stacked rings enclosing a protein folding chamber. Each ring is made up of eight different subunits: TCP1/CCT1, CCT2, CCT3, CCT4, CCT5, CCT6A/CCT6, CCT7, CCT8. Interacts with PACRG.

It localises to the cytoplasm. It catalyses the reaction ATP + H2O = ADP + phosphate + H(+). Component of the chaperonin-containing T-complex (TRiC), a molecular chaperone complex that assists the folding of actin, tubulin and other proteins upon ATP hydrolysis. The TRiC complex mediates the folding of WRAP53/TCAB1, thereby regulating telomere maintenance. The sequence is that of T-complex protein 1 subunit zeta (CCT6) from Sus scrofa (Pig).